A 257-amino-acid chain; its full sequence is tRNA (guanine-N(7)-)-methyltransferase (257 aa).

Positions Met1–Asn58 are disordered. Positions Pro16–Ser26 are enriched in polar residues. Positions Pro36–Gly47 are enriched in basic residues. The S-adenosyl-L-methionine site is built by Glu89, Glu114, Asp141, and Asp164. Residue Asp164 is part of the active site. Lys168 contacts substrate. The interaction with RNA stretch occupies residues Arg170–Arg175. Substrate contacts are provided by residues Asp200 and Thr235 to Glu238.

This sequence belongs to the class I-like SAM-binding methyltransferase superfamily. TrmB family.

It catalyses the reaction guanosine(46) in tRNA + S-adenosyl-L-methionine = N(7)-methylguanosine(46) in tRNA + S-adenosyl-L-homocysteine. It participates in tRNA modification; N(7)-methylguanine-tRNA biosynthesis. Catalyzes the formation of N(7)-methylguanine at position 46 (m7G46) in tRNA. The chain is tRNA (guanine-N(7)-)-methyltransferase from Ralstonia pickettii (strain 12J).